Here is a 507-residue protein sequence, read N- to C-terminus: ATP synthase subunit alpha, chloroplastic (507 aa).

170-177 (GDRQTGKT) serves as a coordination point for ATP.

The protein belongs to the ATPase alpha/beta chains family. F-type ATPases have 2 components, CF(1) - the catalytic core - and CF(0) - the membrane proton channel. CF(1) has five subunits: alpha(3), beta(3), gamma(1), delta(1), epsilon(1). CF(0) has four main subunits: a, b, b' and c.

The protein localises to the plastid. The protein resides in the chloroplast thylakoid membrane. The enzyme catalyses ATP + H2O + 4 H(+)(in) = ADP + phosphate + 5 H(+)(out). In terms of biological role, produces ATP from ADP in the presence of a proton gradient across the membrane. The alpha chain is a regulatory subunit. This chain is ATP synthase subunit alpha, chloroplastic, found in Atropa belladonna (Belladonna).